A 449-amino-acid chain; its full sequence is Packaging protein 1 (449 aa).

Residues 1–78 (METRGRRPAA…PAKRGDMLDR (78 aa)) form a disordered region. 171–178 (GPTGCGKS) is a binding site for ATP. Residues 440-449 (RAYRARKTPK) are DNA-binding.

Belongs to the adenoviridae packaging protein 1 family. Homodimer. Part of a genome packaging complex composed of packaging proteins 1, 2 and 3; this complex specifically binds to the packaging sequence on the left end of viral genomic DNA and performs packaging of the viral genome. Interacts with protein 33K.

It is found in the virion. The protein resides in the host nucleus. The protein localises to the host nucleoplasm. It localises to the host nucleolus. In terms of biological role, component of the packaging machinery which encapsidates the viral DNA into preformed capsids and transcriptional activator of the viral major late promoter (MLP). Binds, along with packaging proteins 2 and 3, to the specific packaging sequence on the left end of viral genomic DNA and displays ATPase activity thereby providing the power stroke of the packaging machinery. The activity of packaging protein IVa2 is stimulated by protein 33K which acts as a terminase. May be the protein that pumps DNA into the capsid powered by ATP hydrolysis. Specifically binds to the 5'-CG-3' nucleotides of the repeats making up the packaging sequence. Component of the DEF-A and DEF-B transcription factors that bind downstream elements of the major late promoter (MLP), and stimulate transcription from the MLP after initiation of viral DNA replication. DEF-A is a heterodimer packaging proteins 1 and 2 and DEF-B is a homodimer of packaging protein 1. The chain is Packaging protein 1 from Human adenovirus C serotype 5 (HAdV-5).